Here is a 200-residue protein sequence, read N- to C-terminus: Intraflagellar transport protein 43 homolog (200 aa).

2 disordered regions span residues lysine 56–proline 76 and glutamate 175–tyrosine 200. Over residues glutamate 175–arginine 192 the composition is skewed to basic and acidic residues.

Belongs to the IFT43 family. Component of the IFT complex A (IFT-A) composed of at least che-11, daf-10, dyf-2, ift-139, ift-43 and ifta-1. As to expression, expressed in ciliated sensory neurons.

It is found in the cell projection. Its subcellular location is the cilium. As a component of IFT complex A (IFT-A), a complex required for retrograde ciliary transport and entry into cilia of G protein-coupled receptors (GPCRs), it is involved in ciliogenesis. In particular, may act redundantly with the intraflagellar transport protein ift-139 to regulate the transport of specific ciliary cargo proteins such as che-3 which are related to motility. In Caenorhabditis elegans, this protein is Intraflagellar transport protein 43 homolog.